Reading from the N-terminus, the 176-residue chain is Ribosome maturation factor RimM (176 aa).

In terms of domain architecture, PRC barrel spans 97–176 (DSEFYHRDLI…QILVDWDPDF (80 aa)).

This sequence belongs to the RimM family. As to quaternary structure, binds ribosomal protein uS19.

The protein resides in the cytoplasm. Functionally, an accessory protein needed during the final step in the assembly of 30S ribosomal subunit, possibly for assembly of the head region. Essential for efficient processing of 16S rRNA. May be needed both before and after RbfA during the maturation of 16S rRNA. It has affinity for free ribosomal 30S subunits but not for 70S ribosomes. The polypeptide is Ribosome maturation factor RimM (Shewanella frigidimarina (strain NCIMB 400)).